The sequence spans 1132 residues: Cytospin-A (1132 aa).

The interval 1–166 is disordered; sequence MKKAGRPVGN…SKSDGQLSDK (166 aa). Composition is skewed to low complexity over residues 73–109 and 119–129; these read STHS…SKES and SRNSSSKKQSS. The segment covering 150–159 has biased composition (basic and acidic residues); that stretch reads SESRMSKSKS. The stretch at 226–268 forms a coiled coil; sequence DVESTLLLLQEQNQAIRGELNLLKNENRMLKDRLNALGFSLEQ. The disordered stretch occupies residues 301-381; the sequence is ASSVEGSAPG…RKGSSGNTSE (81 aa). Over residues 333 to 343 the composition is skewed to polar residues; sequence SEVYQAVTSSD. Over residues 348–377 the composition is skewed to low complexity; sequence APSGCGSSSSSESEGGPPACRSSSRKGSSG. Coiled-coil stretches lie at residues 385 to 440 and 478 to 798; these read ACLT…MDSL and RYME…RGRV. Disordered stretches follow at residues 869 to 895 and 939 to 1016; these read TSTT…AAAV and SRPA…RKDP. The segment covering 875 to 889 has biased composition (pro residues); the sequence is APLPRTPLSPSPMKT. A compositionally biased stretch (polar residues) spans 946 to 961; it reads QRVSNMDTSKTITVSR. A compositionally biased stretch (basic and acidic residues) spans 962-972; sequence RSSEEPKRDIS. Residues 979-1000 show a composition bias toward low complexity; it reads ASSLISMSSAAALSSSSSPTAS. Residues 1026–1131 form the Calponin-homology (CH) domain; the sequence is GSKRNALLRW…YVTSIYKYFE (106 aa).

This sequence belongs to the cytospin-A family. As to quaternary structure, may interact with both microtubules and actin cytoskeleton.

Its subcellular location is the cytoplasm. It localises to the cytoskeleton. It is found in the spindle. The protein localises to the cell junction. The protein resides in the gap junction. Functionally, involved in cytokinesis and spindle organization. May play a role in actin cytoskeleton organization and microtubule stabilization and hence required for proper cell adhesion and migration. The protein is Cytospin-A (specc1la) of Danio rerio (Zebrafish).